A 354-amino-acid chain; its full sequence is Putative [LysW]-L-2-aminoadipate/[LysW]-L-glutamate phosphate reductase (354 aa).

Residues 10–13 (SGVI) and 34–36 (SRR) each bind NADP(+). Cysteine 153 is an active-site residue. Asparagine 321 serves as a coordination point for NADP(+).

The protein belongs to the NAGSA dehydrogenase family. Type 1 subfamily. LysY sub-subfamily.

It is found in the cytoplasm. The enzyme catalyses [amino-group carrier protein]-C-terminal-N-(1-carboxy-5-oxopentan-1-yl)-L-glutamine + phosphate + NADP(+) = [amino-group carrier protein]-C-terminal-N-(1-carboxy-5-phosphooxy-5-oxopentan-1-yl)-L-glutamine + NADPH + H(+). It catalyses the reaction [amino-group carrier protein]-C-terminal-gamma-(L-glutamyl-5-semialdehyde)-L-glutamate + phosphate + NADP(+) = [amino-group carrier protein]-C-terminal-gamma-(5-phospho-L-glutamyl)-L-glutamate + NADPH + H(+). The protein operates within amino-acid biosynthesis; L-lysine biosynthesis via AAA pathway; L-lysine from L-alpha-aminoadipate (Thermus route): step 3/5. It functions in the pathway amino-acid biosynthesis; L-arginine biosynthesis. Functionally, involved in both the arginine and lysine biosynthetic pathways. The sequence is that of Putative [LysW]-L-2-aminoadipate/[LysW]-L-glutamate phosphate reductase from Caldivirga maquilingensis (strain ATCC 700844 / DSM 13496 / JCM 10307 / IC-167).